A 256-amino-acid chain; its full sequence is MNNIWWQTKGQGNVHLVLLHGWGLNAEVWRCIDEELSSHFTLHLVDLPGFGRSRGFGALSLADMAEAVLQQAPDKAIWLGWSLGGLVASQIALTHPERVQALVTVASSPCFSARDEWPGIKPDVLAGFQQQLSDDFQRTVERFLALQTMGTETARQDARALKKTVLALPMPEVDVLNGGLEILKTVDLRQPLQNVSMPFLRLYGYLDGLVPRKVVPMLDKLWPHSESYIFAKAAHAPFISHPAEFCHLLVALKQRV.

The AB hydrolase-1 domain maps to 15–242; that stretch reads HLVLLHGWGL…AAHAPFISHP (228 aa). Residues W22, 82–83, and 143–147 contribute to the substrate site; these read SL and FLALQ. S82 serves as the catalytic Nucleophile. Catalysis depends on residues D207 and H235. H235 is a substrate binding site.

The protein belongs to the AB hydrolase superfamily. Carboxylesterase BioH family. Monomer.

Its subcellular location is the cytoplasm. It catalyses the reaction 6-carboxyhexanoyl-[ACP] methyl ester + H2O = 6-carboxyhexanoyl-[ACP] + methanol + H(+). Its pathway is cofactor biosynthesis; biotin biosynthesis. Its function is as follows. The physiological role of BioH is to remove the methyl group introduced by BioC when the pimeloyl moiety is complete. It allows to synthesize pimeloyl-ACP via the fatty acid synthetic pathway through the hydrolysis of the ester bonds of pimeloyl-ACP esters. The chain is Pimeloyl-[acyl-carrier protein] methyl ester esterase from Escherichia coli (strain K12 / MC4100 / BW2952).